Consider the following 215-residue polypeptide: 3-isopropylmalate dehydratase small subunit (215 aa).

This sequence belongs to the LeuD family. LeuD type 1 subfamily. In terms of assembly, heterodimer of LeuC and LeuD.

It catalyses the reaction (2R,3S)-3-isopropylmalate = (2S)-2-isopropylmalate. It participates in amino-acid biosynthesis; L-leucine biosynthesis; L-leucine from 3-methyl-2-oxobutanoate: step 2/4. Functionally, catalyzes the isomerization between 2-isopropylmalate and 3-isopropylmalate, via the formation of 2-isopropylmaleate. This chain is 3-isopropylmalate dehydratase small subunit, found in Cellvibrio japonicus (strain Ueda107) (Pseudomonas fluorescens subsp. cellulosa).